Reading from the N-terminus, the 252-residue chain is Chitooligosaccharide deacetylase (252 aa).

2 residues coordinate Mg(2+): H61 and H125.

Belongs to the YdjC deacetylase family. ChbG subfamily. In terms of assembly, homodimer. Mg(2+) serves as cofactor.

The protein resides in the cytoplasm. It carries out the reaction N,N'-diacetylchitobiose + H2O = N-acetyl-beta-D-glucosaminyl-(1-&gt;4)-D-glucosamine + acetate. It catalyses the reaction diacetylchitobiose-6'-phosphate + H2O = N'-monoacetylchitobiose-6'-phosphate + acetate. It participates in glycan degradation; chitin degradation. In terms of biological role, involved in the degradation of chitin. ChbG is essential for growth on the acetylated chitooligosaccharides chitobiose and chitotriose but is dispensable for growth on cellobiose and chitosan dimer, the deacetylated form of chitobiose. Deacetylation of chitobiose-6-P and chitotriose-6-P is necessary for both the activation of the chb promoter by the regulatory protein ChbR and the hydrolysis of phosphorylated beta-glucosides by the phospho-beta-glucosidase ChbF. Catalyzes the removal of only one acetyl group from chitobiose-6-P to yield monoacetylchitobiose-6-P, the inducer of ChbR and the substrate of ChbF. In Salmonella dublin (strain CT_02021853), this protein is Chitooligosaccharide deacetylase.